The following is an 87-amino-acid chain: DNA-directed RNA polymerase subunit omega (87 aa).

It belongs to the RNA polymerase subunit omega family. The RNAP catalytic core consists of 2 alpha, 1 beta, 1 beta' and 1 omega subunit. When a sigma factor is associated with the core the holoenzyme is formed, which can initiate transcription.

The enzyme catalyses RNA(n) + a ribonucleoside 5'-triphosphate = RNA(n+1) + diphosphate. Its function is as follows. Promotes RNA polymerase assembly. Latches the N- and C-terminal regions of the beta' subunit thereby facilitating its interaction with the beta and alpha subunits. In Pseudomonas putida (strain W619), this protein is DNA-directed RNA polymerase subunit omega.